Here is a 693-residue protein sequence, read N- to C-terminus: FAST kinase domain-containing protein 2, mitochondrial (693 aa).

Residues serine 110 and serine 124 each carry the phosphoserine modification. Residues 618–675 (VAVLCVSRSAYCLGSSHPRGFLAMKMRHLNAMGFRVILVNNWEMDKLEMEDAVTFLKT) enclose the RAP domain. At serine 692 the chain carries Phosphoserine.

It belongs to the FAST kinase family. Monomer. Found in a complex with GRSF1, DDX28, DHX30 and FASTKD5. Associates with the 16S mitochondrial rRNA (16S mt-rRNA). Forms a regulatory protein-RNA complex, consisting of RCC1L, NGRN, RPUSD3, RPUSD4, TRUB2, FASTKD2 and 16S mt-rRNA.

The protein localises to the mitochondrion matrix. The protein resides in the mitochondrion nucleoid. Its function is as follows. Plays an important role in assembly of the mitochondrial large ribosomal subunit. As a component of a functional protein-RNA module, consisting of RCC1L, NGRN, RPUSD3, RPUSD4, TRUB2, FASTKD2 and 16S mitochondrial ribosomal RNA (16S mt-rRNA), controls 16S mt-rRNA abundance and is required for intra-mitochondrial translation. May play a role in mitochondrial apoptosis. This is FAST kinase domain-containing protein 2, mitochondrial (FASTKD2) from Pongo abelii (Sumatran orangutan).